The sequence spans 137 residues: Large ribosomal subunit protein uL16 (137 aa).

The protein belongs to the universal ribosomal protein uL16 family. As to quaternary structure, part of the 50S ribosomal subunit.

In terms of biological role, binds 23S rRNA and is also seen to make contacts with the A and possibly P site tRNAs. The protein is Large ribosomal subunit protein uL16 of Hydrogenovibrio crunogenus (strain DSM 25203 / XCL-2) (Thiomicrospira crunogena).